A 375-amino-acid polypeptide reads, in one-letter code: Zinc finger CCCH domain-containing protein 57 (375 aa).

5 consecutive C3H1-type zinc fingers follow at residues arginine 42 to aspartate 70, arginine 87 to asparagine 115, arginine 133 to threonine 161, arginine 243 to aspartate 271, and arginine 289 to arginine 317. The segment at serine 352–histidine 375 is disordered.

The protein localises to the nucleus. In Arabidopsis thaliana (Mouse-ear cress), this protein is Zinc finger CCCH domain-containing protein 57 (ZFN3).